A 513-amino-acid polypeptide reads, in one-letter code: MSNETATLVKLSAAEQAAAVKKGDVTSRELVEAHLKVIEAAEPSIKAFLKVSGDVALEQADAFDAKSAEDKAALPELAGVPIAIKDMIVTKGIETTAASKILEGWVPPYDATVIEKLKAAGMPILGKTNLDEFAQGSSTEHSAYQTTHNPWDTERVPGGSGGGSASAVAAFEAPIALGTDTGGSIRQPGALTGTVGVKPTYGGVSRFGAIAMASSLDQIGPVSRTVLDSALLQEIIGGHDKRDSTSIPEGPRPMVAAAREGAKRDLKGMKVGLIKELGGDGFQPGVEARFNEAVDKLKEMGAEVVEVSVPHIGYSLGAYYIIMPSEVSSNLARYDGMRYGLRVMPPTGVPQTAANMMAYTREAGFGDEVKRRIILGTYALSAGYYDAWYGSAQKVRTLIIEDFKKAFEQVDVLVAPTSPSTAFKFGEKMDDPLAMYMNDIATIPANLAGVPAMSIPAGLSDDGLPVGFQFIAPQQRDEVMYKPAAALEAALEDSWNGPIWNDLKTPWLDGLGK.

Catalysis depends on charge relay system residues Lys85 and Ser160. Ser184 serves as the catalytic Acyl-ester intermediate.

The protein belongs to the amidase family. GatA subfamily. In terms of assembly, heterotrimer of A, B and C subunits.

The enzyme catalyses L-glutamyl-tRNA(Gln) + L-glutamine + ATP + H2O = L-glutaminyl-tRNA(Gln) + L-glutamate + ADP + phosphate + H(+). Its function is as follows. Allows the formation of correctly charged Gln-tRNA(Gln) through the transamidation of misacylated Glu-tRNA(Gln) in organisms which lack glutaminyl-tRNA synthetase. The reaction takes place in the presence of glutamine and ATP through an activated gamma-phospho-Glu-tRNA(Gln). In Bifidobacterium longum (strain NCC 2705), this protein is Glutamyl-tRNA(Gln) amidotransferase subunit A.